The chain runs to 132 residues: UPF0102 protein Acid_2433 (132 aa).

It belongs to the UPF0102 family.

This Solibacter usitatus (strain Ellin6076) protein is UPF0102 protein Acid_2433.